The chain runs to 88 residues: Small ribosomal subunit protein bS16 (88 aa).

Belongs to the bacterial ribosomal protein bS16 family.

In Syntrophomonas wolfei subsp. wolfei (strain DSM 2245B / Goettingen), this protein is Small ribosomal subunit protein bS16.